We begin with the raw amino-acid sequence, 38 residues long: Large ribosomal subunit protein bL36 (38 aa).

The protein belongs to the bacterial ribosomal protein bL36 family.

This Lactobacillus johnsonii (strain CNCM I-12250 / La1 / NCC 533) protein is Large ribosomal subunit protein bL36.